A 78-amino-acid chain; its full sequence is Defensin-like protein 74 (78 aa).

An N-terminal signal peptide occupies residues 1-28 (MNYKIGIMSLLVITSIIFLFLVPDKVEA). 4 disulfides stabilise this stretch: C32–C73, C36–C58, C42–C71, and C46–C72.

It belongs to the DEFL family.

The protein resides in the secreted. The protein is Defensin-like protein 74 (LCR43) of Arabidopsis thaliana (Mouse-ear cress).